The chain runs to 124 residues: Large ribosomal subunit protein uL22 (124 aa).

It belongs to the universal ribosomal protein uL22 family. In terms of assembly, part of the 50S ribosomal subunit.

Its function is as follows. This protein binds specifically to 23S rRNA; its binding is stimulated by other ribosomal proteins, e.g. L4, L17, and L20. It is important during the early stages of 50S assembly. It makes multiple contacts with different domains of the 23S rRNA in the assembled 50S subunit and ribosome. The globular domain of the protein is located near the polypeptide exit tunnel on the outside of the subunit, while an extended beta-hairpin is found that lines the wall of the exit tunnel in the center of the 70S ribosome. The polypeptide is Large ribosomal subunit protein uL22 (Synechococcus sp. (strain JA-2-3B'a(2-13)) (Cyanobacteria bacterium Yellowstone B-Prime)).